The chain runs to 485 residues: GTPase Obg (485 aa).

One can recognise an Obg domain in the interval 2-159 (PRFVDRVVIH…RDLTLELKTV (158 aa)). An OBG-type G domain is found at 160–341 (ADVGLIGFPS…LIFALWEMVK (182 aa)). GTP-binding positions include 166–173 (GFPSAGKS), 191–195 (FTTLV), 212–215 (DVPG), 292–295 (NKID), and 322–324 (STV). 2 residues coordinate Mg(2+): Ser173 and Thr193. The OCT domain occupies 359–437 (PIPVDESGFT…IGDVTFDWEP (79 aa)). The segment at 450-485 (RGTDIRLEQTDRVGAAERKAARRERRQPGESGGEDS) is disordered. A compositionally biased stretch (basic and acidic residues) spans 452-468 (TDIRLEQTDRVGAAERK).

Belongs to the TRAFAC class OBG-HflX-like GTPase superfamily. OBG GTPase family. Monomer. Requires Mg(2+) as cofactor.

The protein resides in the cytoplasm. Its function is as follows. An essential GTPase which binds GTP, GDP and possibly (p)ppGpp with moderate affinity, with high nucleotide exchange rates and a fairly low GTP hydrolysis rate. Plays a role in control of the cell cycle, stress response, ribosome biogenesis and in those bacteria that undergo differentiation, in morphogenesis control. This is GTPase Obg from Mycolicibacterium smegmatis (strain ATCC 700084 / mc(2)155) (Mycobacterium smegmatis).